Reading from the N-terminus, the 143-residue chain is Hemoglobin subunit alpha (143 aa).

A Globin domain is found at 2–143; that stretch reads RFSQDDEVLI…IVHVLISLYR (142 aa). His60 lines the O2 pocket. Position 89 (His89) interacts with heme b.

Belongs to the globin family. As to quaternary structure, heterotetramer of two alpha chains and two beta chains. As to expression, red blood cells.

Its function is as follows. Involved in oxygen transport from the lung to the various peripheral tissues. This Lepidosiren paradoxus (South American lungfish) protein is Hemoglobin subunit alpha (HBA).